The chain runs to 798 residues: Peregrinol diphosphate synthase TPS1, chloroplastic (798 aa).

The transit peptide at 1–25 (MASLSTPNINNTTFVNSKTQLPAVK) directs the protein to the chloroplast. K243 contacts substrate. Mg(2+) contacts are provided by D377 and D379. Positions 377-380 (DLDD) match the DXDD motif motif. K463 contacts substrate.

It belongs to the terpene synthase family. Requires Mg(2+) as cofactor. Mostly expressed in trichomes of leaves and fruits.

It is found in the plastid. Its subcellular location is the chloroplast. It catalyses the reaction peregrinol diphosphate = (2E,6E,10E)-geranylgeranyl diphosphate + H2O. It participates in secondary metabolite biosynthesis; terpenoid biosynthesis. Its function is as follows. Involved in the biosynthesis of labdane-type diterpenoid including cleroda-dienols, and peregrinol lactones and furan derivatives, dopaminergic diterpenoids that can bind to dopamine receptors in the human pituitary gland, have probably ability to lower prolactin levels, and are used to treat menstrual cycle disorders (e.g. premenstrual syndrome and mastodynia). Terpene synthase that produces peregrinol diphosphate from geranylgeranyl diphosphate (GGPP). The polypeptide is Peregrinol diphosphate synthase TPS1, chloroplastic (Vitex agnus-castus (Chaste tree)).